A 423-amino-acid chain; its full sequence is Protein CLP1 homolog (423 aa).

ATP is bound by residues E19, K60, and 122–127 (DVGKTT).

Belongs to the Clp1 family. Clp1 subfamily.

The protein localises to the nucleus. Its function is as follows. Required for endonucleolytic cleavage during polyadenylation-dependent pre-mRNA 3'-end formation. This Anopheles gambiae (African malaria mosquito) protein is Protein CLP1 homolog (cbc).